A 285-amino-acid polypeptide reads, in one-letter code: NAD kinase (285 aa).

Catalysis depends on Asp67, which acts as the Proton acceptor. Residues Asp67–Gly68, Asn141–Asp142, Arg152, Lys169, Asp171, Thr182–Ser187, and Gln242 contribute to the NAD(+) site.

The protein belongs to the NAD kinase family. A divalent metal cation serves as cofactor.

It localises to the cytoplasm. It catalyses the reaction NAD(+) + ATP = ADP + NADP(+) + H(+). Involved in the regulation of the intracellular balance of NAD and NADP, and is a key enzyme in the biosynthesis of NADP. Catalyzes specifically the phosphorylation on 2'-hydroxyl of the adenosine moiety of NAD to yield NADP. The sequence is that of NAD kinase from Trichlorobacter lovleyi (strain ATCC BAA-1151 / DSM 17278 / SZ) (Geobacter lovleyi).